We begin with the raw amino-acid sequence, 547 residues long: Methionine--tRNA ligase (547 aa).

A 'HIGH' region motif is present at residues 13–23 (PYANGPLHIGH). Residues cysteine 145, cysteine 148, cysteine 158, and cysteine 161 each contribute to the Zn(2+) site. The 'KMSKS' region signature appears at 334-338 (QFSKS). An ATP-binding site is contributed by lysine 337.

The protein belongs to the class-I aminoacyl-tRNA synthetase family. MetG type 1 subfamily. Zn(2+) serves as cofactor.

The protein localises to the cytoplasm. It carries out the reaction tRNA(Met) + L-methionine + ATP = L-methionyl-tRNA(Met) + AMP + diphosphate. Is required not only for elongation of protein synthesis but also for the initiation of all mRNA translation through initiator tRNA(fMet) aminoacylation. This chain is Methionine--tRNA ligase, found in Thermoplasma acidophilum (strain ATCC 25905 / DSM 1728 / JCM 9062 / NBRC 15155 / AMRC-C165).